The following is a 1485-amino-acid chain: Dicer-like protein 2 (1485 aa).

Residues 1 to 11 (MSSQDESASSS) show a composition bias toward low complexity. Residues 1–61 (MSSQDESASS…EPQPSGNGPR (61 aa)) form a disordered region. One can recognise a Helicase ATP-binding domain in the interval 72 to 250 (MFQASMQQNI…MEDLESSLDS (179 aa)). ATP is bound at residue 85–92 (MDTGSGKT). Positions 193-196 (DEAH) match the DEAH box motif. In terms of domain architecture, Helicase C-terminal spans 415-579 (KLQVLLRILR…RYENDMRELD (165 aa)). One can recognise a Dicer dsRNA-binding fold domain in the interval 609 to 712 (AKGHLEHFCR…LPIRESDFVD (104 aa)). RNase III domains follow at residues 988 to 1127 (AQEL…IEGG) and 1168 to 1358 (LGPL…VDSG). Residues E1208, D1344, and E1347 each coordinate Mg(2+). A DRBM domain is found at 1388–1469 (HPKEELGRVA…ALEVIRVWEE (82 aa)).

The protein belongs to the helicase family. Dicer subfamily. Mg(2+) is required as a cofactor. It depends on Mn(2+) as a cofactor.

Its function is as follows. Dicer-like endonuclease involved in cleaving double-stranded RNA in the RNA interference (RNAi) pathway. Produces 21 to 25 bp dsRNAs (siRNAs) which target the selective destruction of homologous RNAs leading to sequence-specific suppression of gene expression, called post-transcriptional gene silencing (PTGS). Part of a broad host defense response against viral infection and transposons. This chain is Dicer-like protein 2 (DCL2), found in Pyricularia oryzae (strain 70-15 / ATCC MYA-4617 / FGSC 8958) (Rice blast fungus).